The sequence spans 142 residues: Neurofilament heavy polypeptide (142 aa).

The 142-residue stretch at Met1 to Met142 folds into the IF rod domain. The stretch at Ile26–Glu74 forms a coiled coil.

The protein belongs to the intermediate filament family. In terms of assembly, forms heterodimers with NEFL; which can further hetero-oligomerize (in vitro). Forms heterodimers with INA (in vitro). In terms of processing, there are a number of repeats of the tripeptide K-S-P, NFH is phosphorylated on a number of the serines in this motif. It is thought that phosphorylation of NFH results in the formation of interfilament cross bridges that are important in the maintenance of axonal caliber. Post-translationally, phosphorylation seems to play a major role in the functioning of the larger neurofilament polypeptides (NF-M and NF-H), the levels of phosphorylation being altered developmentally and coincidentally with a change in the neurofilament function. Phosphorylated in the head and rod regions by the PKC kinase PKN1, leading to the inhibition of polymerization.

It localises to the cytoplasm. Its subcellular location is the cytoskeleton. It is found in the cell projection. The protein resides in the axon. Neurofilaments usually contain three intermediate filament proteins: NEFL, NEFM, and NEFH which are involved in the maintenance of neuronal caliber. NEFH has an important function in mature axons that is not subserved by the two smaller NF proteins. May additionally cooperate with the neuronal intermediate filament proteins PRPH and INA to form neuronal filamentous networks. The chain is Neurofilament heavy polypeptide (NEFH) from Sus scrofa (Pig).